Reading from the N-terminus, the 224-residue chain is Putative cytochrome c-type biogenesis protein DbsD-like (224 aa).

5 consecutive transmembrane segments (helical) span residues 32–52, 74–94, 104–124, 150–170, and 176–196; these read FIFL…ILPV, FLFC…ATLI, GIPT…LNIV, GIGI…LVWI, and IFTG…PIII.

The protein belongs to the DsbD family.

It is found in the plastid. The protein resides in the chloroplast membrane. Its function is as follows. Could be involved in cytochrome c synthesis. The protein is Putative cytochrome c-type biogenesis protein DbsD-like of Pyropia yezoensis (Susabi-nori).